A 286-amino-acid polypeptide reads, in one-letter code: Beta-lactamase TEM-12 (286 aa).

The N-terminal stretch at 1-23 is a signal peptide; the sequence is MSIQHFRVALIPFFAAFCLPVFA. The Acyl-ester intermediate role is filled by Ser68. Cysteines 75 and 121 form a disulfide. Glu166 functions as the Proton acceptor in the catalytic mechanism. 232–234 contributes to the substrate binding site; the sequence is KSG.

It belongs to the class-A beta-lactamase family.

It catalyses the reaction a beta-lactam + H2O = a substituted beta-amino acid. In terms of biological role, TEM-type are the most prevalent beta-lactamases in enterobacteria; they hydrolyze the beta-lactam bond in susceptible beta-lactam antibiotics, thus conferring resistance to penicillins and cephalosporins such as ceftazidime. The chain is Beta-lactamase TEM-12 (blaT-12b) from Klebsiella oxytoca.